Here is a 161-residue protein sequence, read N- to C-terminus: Beta-lactoglobulin-2 (161 aa).

Intrachain disulfides connect Cys66-Cys159 and Cys106-Cys119.

This sequence belongs to the calycin superfamily. Lipocalin family. Monomer. As to expression, synthesized in mammary gland and secreted in milk.

Its subcellular location is the secreted. Its function is as follows. Primary component of whey, it binds retinol and is probably involved in the transport of that molecule. The sequence is that of Beta-lactoglobulin-2 (LGB2) from Canis lupus familiaris (Dog).